The chain runs to 456 residues: Bifunctional protein GlmU (456 aa).

Positions Met-1–Arg-229 are pyrophosphorylase. UDP-N-acetyl-alpha-D-glucosamine contacts are provided by residues Leu-11 to Gly-14, Lys-25, Gln-76, Gly-81 to Thr-82, Tyr-103 to Asp-105, Gly-140, Glu-154, Asn-169, and Asn-227. Mg(2+) is bound at residue Asp-105. Asn-227 serves as a coordination point for Mg(2+). Residues Leu-230 to Ala-250 form a linker region. The N-acetyltransferase stretch occupies residues Gly-251–Lys-456. Residues Arg-333 and Lys-351 each coordinate UDP-N-acetyl-alpha-D-glucosamine. Catalysis depends on His-363, which acts as the Proton acceptor. Tyr-366 and Asn-377 together coordinate UDP-N-acetyl-alpha-D-glucosamine. Acetyl-CoA is bound by residues Ala-380, Asn-386–Tyr-387, Ser-405, Ala-423, and Arg-440.

It in the N-terminal section; belongs to the N-acetylglucosamine-1-phosphate uridyltransferase family. In the C-terminal section; belongs to the transferase hexapeptide repeat family. Homotrimer. It depends on Mg(2+) as a cofactor.

The protein resides in the cytoplasm. The enzyme catalyses alpha-D-glucosamine 1-phosphate + acetyl-CoA = N-acetyl-alpha-D-glucosamine 1-phosphate + CoA + H(+). It catalyses the reaction N-acetyl-alpha-D-glucosamine 1-phosphate + UTP + H(+) = UDP-N-acetyl-alpha-D-glucosamine + diphosphate. It functions in the pathway nucleotide-sugar biosynthesis; UDP-N-acetyl-alpha-D-glucosamine biosynthesis; N-acetyl-alpha-D-glucosamine 1-phosphate from alpha-D-glucosamine 6-phosphate (route II): step 2/2. It participates in nucleotide-sugar biosynthesis; UDP-N-acetyl-alpha-D-glucosamine biosynthesis; UDP-N-acetyl-alpha-D-glucosamine from N-acetyl-alpha-D-glucosamine 1-phosphate: step 1/1. Its pathway is bacterial outer membrane biogenesis; LPS lipid A biosynthesis. Functionally, catalyzes the last two sequential reactions in the de novo biosynthetic pathway for UDP-N-acetylglucosamine (UDP-GlcNAc). The C-terminal domain catalyzes the transfer of acetyl group from acetyl coenzyme A to glucosamine-1-phosphate (GlcN-1-P) to produce N-acetylglucosamine-1-phosphate (GlcNAc-1-P), which is converted into UDP-GlcNAc by the transfer of uridine 5-monophosphate (from uridine 5-triphosphate), a reaction catalyzed by the N-terminal domain. In Pectobacterium carotovorum subsp. carotovorum (strain PC1), this protein is Bifunctional protein GlmU.